The chain runs to 330 residues: Thiosulfate transporter TsuA (330 aa).

The Periplasmic portion of the chain corresponds to 1–2 (MI). The chain crosses the membrane as a helical span at residues 3–18 (WTGLLVGFLFGIVLQR). Residues 19–36 (GRICFNSAFRDVLLFKDN) are Cytoplasmic-facing. Residues 37–59 (YLFKLAVFTLALEMILFVLLSQV) form a helical membrane-spanning segment. Topologically, residues 60–70 (GLMQMNPKPLN) are periplasmic. The chain crosses the membrane as a helical span at residues 71 to 87 (LVGNIIGGFVFGLGMVL). At 88–102 (AGGCASGVTYRVGEG) the chain is on the cytoplasmic side. Residues 103–121 (LTTAWFAALFYGLGAYATK) form a helical membrane-spanning segment. Residues 122–162 (SGAFSWWLSWVGQFKSPLSVEESAYYVKGAGPTISSVLGLN) are Periplasmic-facing. The helical transmembrane segment at 163-180 (PWIPALVIAALFILWAFG) threads the bilayer. Topologically, residues 181-189 (TKTTSRETK) are cytoplasmic. Residues 190 to 211 (FNWKIASVCLALVAGLGFITST) form a helical membrane-spanning segment. Residues 212-239 (LSGRKYGLGITGGWINLFQGFLTNSPLN) lie on the Periplasmic side of the membrane. The chain crosses the membrane as a helical span at residues 240–258 (WEGLEIVGIILGAGVAAAV). Residues 259–269 (AGEFKLRMPKN) lie on the Cytoplasmic side of the membrane. The helical transmembrane segment at 270–289 (PVTYLQVGIGGLLMGIGAVT) threads the bilayer. Residues 290-306 (AGGCNIGHFLTGVPQLA) lie on the Periplasmic side of the membrane. Residues 307 to 326 (LSSWLASIFFILGNWTMAWI) form a helical membrane-spanning segment. Residues 327–330 (LFRR) lie on the Cytoplasmic side of the membrane.

Belongs to the TsuA/YedE (TC 9.B.102) family.

It localises to the cell inner membrane. It catalyses the reaction thiosulfate(in) = thiosulfate(out). Mediates thiosulfate uptake. The sequence is that of Thiosulfate transporter TsuA from Spirochaeta thermophila (strain ATCC 700085 / DSM 6578 / Z-1203).